Consider the following 538-residue polypeptide: Putative cysteine ligase BshC (538 aa).

A coiled-coil region spans residues Lys460–Leu484.

It belongs to the BshC family.

Its function is as follows. Involved in bacillithiol (BSH) biosynthesis. May catalyze the last step of the pathway, the addition of cysteine to glucosamine malate (GlcN-Mal) to generate BSH. This is Putative cysteine ligase BshC from Bacillus cereus (strain AH187).